A 311-amino-acid chain; its full sequence is Splicing factor spf30 (311 aa).

Residues 76–139 (DFTPGNLVMA…KAMPEEKRQE (64 aa)) form the Tudor domain. 2 disordered regions span residues 154 to 183 (RSTPVREPTKAISVASMSTSPSNYASRASS) and 276 to 311 (STEDFPGRTNPKNFGNVARSGHREKHIYNYREDEDS). A compositionally biased stretch (polar residues) spans 168 to 183 (ASMSTSPSNYASRASS). Phosphoserine is present on S173. Residues 301–311 (HIYNYREDEDS) are compositionally biased toward basic and acidic residues.

It belongs to the SMN family. Associates with spliceosomes.

Its subcellular location is the nucleus. In terms of biological role, involved in spliceosome assembly. This Schizosaccharomyces pombe (strain 972 / ATCC 24843) (Fission yeast) protein is Splicing factor spf30 (spf30).